The following is a 1053-amino-acid chain: CRISPR-associated endonuclease Cas9 (1053 aa).

The tract at residues 1–41 (MKRNYILGLDIGITSVGYGIIDYETRDVIDAGVRLFKEANV) is ruvC-I. Asp-10 acts as the For RuvC-like nuclease domain in catalysis. Asp-10 contacts Mg(2+). Residues 41–426 (VENNEGRRSK…IFNRLKLVPK (386 aa)) form a recognition lobe region. Residues 435 to 481 (EIPTTLVDDFILSPVVKRSFIQSIKVINAIIKKYGLPNDIIIELARE) are ruvC-II. Glu-477 and Glu-481 together coordinate Mg(2+). In terms of domain architecture, HNH Cas9-type spans 480–646 (REKNSKDAQK…VQKDFINRNL (167 aa)). The active-site Proton acceptor for HNH nuclease domain is the His-557. Residues 650 to 775 (RYATRGLMNL…FKDYKYSHRV (126 aa)) are ruvC-III. His-701 contributes to the Mg(2+) binding site. Tyr-789 contacts RNA. PAM substrate-binding stretches follow at residues 882–889 (YYGNKLNA) and 985–993 (NNDLLNRIE). A PAM-interacting domain (PI) region spans residues 910-1053 (KPYRFDVYLD…KKHPQIIKKG (144 aa)).

The protein belongs to the CRISPR-associated Cas9 family. Subtype II-A subfamily. Monomer. Binds crRNA and tracrRNA. Mg(2+) serves as cofactor.

Functionally, CRISPR (clustered regularly interspaced short palindromic repeat) is an adaptive immune system that provides protection against mobile genetic elements (viruses, transposable elements and conjugative plasmids). CRISPR clusters contain spacers, sequences complementary to antecedent mobile elements, and target invading nucleic acids. CRISPR clusters are transcribed and processed into CRISPR RNA (crRNA). In type II CRISPR systems correct processing of pre-crRNA requires a trans-encoded small RNA (tracrRNA), endogenous ribonuclease 3 (rnc) and this protein. The tracrRNA serves as a guide for ribonuclease 3-aided processing of pre-crRNA. Subsequently Cas9/crRNA/tracrRNA endonucleolytically cleaves linear or circular dsDNA target complementary to the spacer; Cas9 is inactive in the absence of the 2 guide RNAs (gRNA). Cas9 recognizes the protospacer adjacent motif (PAM) in the CRISPR repeat sequences to help distinguish self versus nonself, as targets within the bacterial CRISPR locus do not have PAMs. PAM recognition is also required for catalytic activity. The protein is CRISPR-associated endonuclease Cas9 of Staphylococcus aureus.